A 474-amino-acid polypeptide reads, in one-letter code: MNSFKEEYRVPIFNLIKNCYTRTCQDLLSLGNEDANQLSVDLKKLFFMYNKKQFNQLKNIHESIYKLTWNKLLKQGGWEHICLRESFIMGQLAGITYWYTQNDLIKTLEICDQSFIMGAPKELLLPIMDELSKKQTTTTTSTSPTIPMILDENVNFSKFPIIDKNHEIKVIECGKNNGGASGSGGDYLNEFSIFKNQHLNTMTPCIIKGDANNWECINKWKDLNYFLSNHGNRIVPIELGHNKLDSKTKKQQQQQQTTTTTANNDNDNSIDWSEKLMKLKDFIEEYMIPSSKDNDSTATESSKVAYLAQHGLIEQLPSLLDDFKFPLFLQTTGDAKVHETEEEGISPHIWLGTGNTITPLHFDSYDNFLTQIVGYKYVRLYPQNQISNLYLKKDQGDSDDNNLVKNSKTAQNNISFVDFEDTDFEKYPLLKIANQHYTECILGPGDILFMPSGYFHYVRSLSTSLSLSFWFIKK.

Residues 247 to 269 (KTKKQQQQQQTTTTTANNDNDNS) are disordered. Positions 251-261 (QQQQQQTTTTT) are enriched in low complexity. A JmjC domain is found at 305–474 (AYLAQHGLIE…LSLSFWFIKK (170 aa)).

In Dictyostelium discoideum (Social amoeba), this protein is JmjC domain-containing protein F (jcdF).